The chain runs to 92 residues: Probable Fe(2+)-trafficking protein (92 aa).

It belongs to the Fe(2+)-trafficking protein family.

Its function is as follows. Could be a mediator in iron transactions between iron acquisition and iron-requiring processes, such as synthesis and/or repair of Fe-S clusters in biosynthetic enzymes. The sequence is that of Probable Fe(2+)-trafficking protein from Shewanella oneidensis (strain ATCC 700550 / JCM 31522 / CIP 106686 / LMG 19005 / NCIMB 14063 / MR-1).